The following is a 425-amino-acid chain: Serine hydroxymethyltransferase (425 aa).

Residues L124 and 128 to 130 contribute to the (6S)-5,6,7,8-tetrahydrofolate site; that span reads GHL. Residue K233 is modified to N6-(pyridoxal phosphate)lysine.

The protein belongs to the SHMT family. Homodimer. It depends on pyridoxal 5'-phosphate as a cofactor.

Its subcellular location is the cytoplasm. It catalyses the reaction (6R)-5,10-methylene-5,6,7,8-tetrahydrofolate + glycine + H2O = (6S)-5,6,7,8-tetrahydrofolate + L-serine. Its pathway is one-carbon metabolism; tetrahydrofolate interconversion. It participates in amino-acid biosynthesis; glycine biosynthesis; glycine from L-serine: step 1/1. Functionally, catalyzes the reversible interconversion of serine and glycine with tetrahydrofolate (THF) serving as the one-carbon carrier. This reaction serves as the major source of one-carbon groups required for the biosynthesis of purines, thymidylate, methionine, and other important biomolecules. Also exhibits THF-independent aldolase activity toward beta-hydroxyamino acids, producing glycine and aldehydes, via a retro-aldol mechanism. This Clavibacter sepedonicus (Clavibacter michiganensis subsp. sepedonicus) protein is Serine hydroxymethyltransferase.